The following is a 95-amino-acid chain: Osteocalcin (95 aa).

Positions 1-23 (MRTIFLLTLLTLAALCLSDLTDA) are cleaved as a signal peptide. The propeptide occupies 24–49 (KPSGPESDKAFMSKQEGNKVVNRLRR). One can recognise a Gla domain in the interval 46–92 (RLRRYLGASVPSPDPLEPTREQCELNPACDELSDQYGLKTAYKRIYG). Residues E62, E66, E69, and D75 each contribute to the Ca(2+) site. 3 positions are modified to 4-carboxyglutamate: E62, E66, and E69. An intrachain disulfide couples C68 to C74.

It belongs to the osteocalcin/matrix Gla protein family. Post-translationally, gamma-carboxyglutamate residues are formed by vitamin K dependent carboxylation by GGCX. These residues are essential for the binding of calcium. Carboxylated in a Ptprv/Esp-dependent process. Decarboxylation promotes the hormone activity. In terms of tissue distribution, bone.

Its subcellular location is the secreted. The carboxylated form is one of the main organic components of the bone matrix, which constitutes 1-2% of the total bone protein: it acts as a negative regulator of bone formation and is required to limit bone formation without impairing bone resorption or mineralization. The carboxylated form binds strongly to apatite and calcium. In terms of biological role, the uncarboxylated form acts as a hormone secreted by osteoblasts, which regulates different cellular processes, such as energy metabolism, male fertility and brain development. Regulates of energy metabolism by acting as a hormone favoring pancreatic beta-cell proliferation, insulin secretion and sensitivity and energy expenditure. Uncarboxylated osteocalcin hormone also promotes testosterone production in the testes: acts as a ligand for G protein-coupled receptor GPRC6A at the surface of Leydig cells, initiating a signaling response that promotes the expression of enzymes required for testosterone synthesis in a CREB-dependent manner. Also acts as a regulator of brain development: osteocalcin hormone crosses the blood-brain barrier and acts as a ligand for GPR158 on neurons, initiating a signaling response that prevents neuronal apoptosis in the hippocampus, favors the synthesis of all monoamine neurotransmitters and inhibits that of gamma-aminobutyric acid (GABA). Osteocalcin also crosses the placenta during pregnancy and maternal osteocalcin is required for fetal brain development. In Mus musculus (Mouse), this protein is Osteocalcin.